Reading from the N-terminus, the 185-residue chain is MISVNDFRTGLTITVDNDLWQVIEFQHVKPGKGAAFVRSKLRNLRTGAIQEKTFRAGEKVEKAHIENRRMQYLYASGEAHVFMDNGTYEQIELSEAQIERELKFLKENMEVSIMTYQGEVLGVELPNTVELKVVETEPGIKGDTASNVTKPATLETGLVVQVPIFINEGEMLVINTAEGKYVSRA.

Belongs to the elongation factor P family.

Its subcellular location is the cytoplasm. The protein operates within protein biosynthesis; polypeptide chain elongation. Its function is as follows. Involved in peptide bond synthesis. Stimulates efficient translation and peptide-bond synthesis on native or reconstituted 70S ribosomes in vitro. Probably functions indirectly by altering the affinity of the ribosome for aminoacyl-tRNA, thus increasing their reactivity as acceptors for peptidyl transferase. The protein is Elongation factor P of Bacillus cytotoxicus (strain DSM 22905 / CIP 110041 / 391-98 / NVH 391-98).